We begin with the raw amino-acid sequence, 148 residues long: UPF0178 protein Mlg_1612 (148 aa).

This sequence belongs to the UPF0178 family.

The sequence is that of UPF0178 protein Mlg_1612 from Alkalilimnicola ehrlichii (strain ATCC BAA-1101 / DSM 17681 / MLHE-1).